Consider the following 554-residue polypeptide: Phosphomethylpyrimidine synthase (554 aa).

Residues Asn-188, Met-217, Tyr-246, His-282, 302 to 304, 343 to 346, and Glu-382 each bind substrate; these read SRG and DGLR. Zn(2+) is bound at residue His-386. Position 409 (Tyr-409) interacts with substrate. His-450 is a Zn(2+) binding site. Residues Cys-530, Cys-533, and Cys-538 each coordinate [4Fe-4S] cluster.

The protein belongs to the ThiC family. As to quaternary structure, homodimer. Requires [4Fe-4S] cluster as cofactor.

The enzyme catalyses 5-amino-1-(5-phospho-beta-D-ribosyl)imidazole + S-adenosyl-L-methionine = 4-amino-2-methyl-5-(phosphooxymethyl)pyrimidine + CO + 5'-deoxyadenosine + formate + L-methionine + 3 H(+). It participates in cofactor biosynthesis; thiamine diphosphate biosynthesis. Functionally, catalyzes the synthesis of the hydroxymethylpyrimidine phosphate (HMP-P) moiety of thiamine from aminoimidazole ribotide (AIR) in a radical S-adenosyl-L-methionine (SAM)-dependent reaction. This chain is Phosphomethylpyrimidine synthase, found in Coxiella burnetii (strain RSA 493 / Nine Mile phase I).